We begin with the raw amino-acid sequence, 60 residues long: MKNTILILFTAFIALLGFFGMSAEALADPIADPVAGPNPEADPEAINLKAIAAFAKKLLG.

The N-terminal stretch at 1-27 (MKNTILILFTAFIALLGFFGMSAEALA) is a signal peptide. 4 AXPX repeats span residues 27 to 30 (ADPI), 31 to 34 (ADPV), 35 to 38 (AGPN), and 41 to 44 (ADPE). A propeptide spanning residues 28–45 (DPIADPVAGPNPEADPEA) is cleaved from the precursor. Leu-59 is modified (leucine amide).

This sequence belongs to the MCD family. Mastoparan subfamily. Expressed by the venom gland.

It is found in the secreted. Its subcellular location is the target cell membrane. Its function is as follows. Antimicrobial and mast cell degranulating peptide. Has broad spectrum antibacterial activity against both Gram-positive and Gram-negative bacteria (S.aureus MIC=24-32 ug/ml, S.xylosus MIC=2 ug/ml, S.alactolyticus MIC=16 ug/ml, C.koseri MIC=4 ug/ml, E.coli MIC=8 ug/ml, K.pneumoniae MIC=32 ug/ml, P.aerugiosa MIC=128 ug/ml, S.choleraesuis MIC=16 ug/ml, S.typhimurium MIC=32 ug/ml, V.parahamelytics MIC=32 ug/ml). Affects membrane permeability of E.coli. Shows hemolytic activities on sheep, chicken and human erythrocytes. Its mast cell degranulation activity may be related to the activation of G-protein coupled receptors in mast cells as well as interaction with other proteins located in cell endosomal membranes in the mast cells. The protein is Mastoparan-D of Vespa ducalis (Black-tailed hornet).